Reading from the N-terminus, the 169-residue chain is MERAIFAGGCFWCMVQPFEEQAGILSVRSGYTGGHVPNPSYEQVCSKTTGHTEAVEIIFDPSLISYSDLVELYWAQTDPTDAFGQFEDRGDNYRPVIYYTDERQREIAERSKQTLQASGRFDQPIVTSIKPAEPFYLAEDYHQGFYQKNPERYAQSSAIRHQFLEEHWQ.

C10 is a catalytic residue.

Belongs to the MsrA Met sulfoxide reductase family.

The catalysed reaction is L-methionyl-[protein] + [thioredoxin]-disulfide + H2O = L-methionyl-(S)-S-oxide-[protein] + [thioredoxin]-dithiol. It carries out the reaction [thioredoxin]-disulfide + L-methionine + H2O = L-methionine (S)-S-oxide + [thioredoxin]-dithiol. Its function is as follows. Has an important function as a repair enzyme for proteins that have been inactivated by oxidation. Catalyzes the reversible oxidation-reduction of methionine sulfoxide in proteins to methionine. The chain is Peptide methionine sulfoxide reductase MsrA from Streptococcus equi subsp. zooepidemicus (strain H70).